Reading from the N-terminus, the 1247-residue chain is Structural polyprotein (1247 aa).

Residues 36-67 form a host transcription inhibition region; sequence RPAGQLAQLISAVSRLALRTVPQKPRRTRKIK. The tract at residues 53–103 is disordered; it reads LRTVPQKPRRTRKIKKQKQVKQEQQSTRNQKKKAPKQKQTQKKKRPGRRER. 2 stretches are compositionally biased toward basic residues: residues 59-71 and 81-100; these read KPRR…KQKQ and NQKK…RPGR. Residues 60–98 carry the Nuclear localization signal motif; the sequence is PRRTRKIKKQKQVKQEQQSTRNQKKKAPKQKQTQKKKRP. A binding to the viral RNA region spans residues 83-113; that stretch reads KKKAPKQKQTQKKKRPGRRERMCMKIENDCI. A ribosome-binding region spans residues 98-112; sequence PGRRERMCMKIENDC. Cysteine 112 and cysteine 127 are joined by a disulfide. One can recognise a Peptidase S3 domain in the interval 112-260; the sequence is CIFEVKHEGK…KITPEGSVEW (149 aa). Histidine 138 (charge relay system) is an active-site residue. The short motif at 143-153 is the Nuclear export signal element; that stretch reads IDNADLAKLAF. Residues 154 to 159 form an interaction with spike glycoprotein E2 region; the sequence is KRSSKY. Aspartate 160 serves as the catalytic Charge relay system. Positions 182–192 are dimerization of the capsid protein; the sequence is PEGYYNWHHGA. Catalysis depends on serine 212, which acts as the Charge relay system. A dimerization of the capsid protein region spans residues 218 to 222; that stretch reads DNKGR. The tract at residues 261–273 is functions as an uncleaved signal peptide for the precursor of protein E3/E2; sequence SLALPVMCLLANT. 9 cysteine pairs are disulfide-bonded: cysteine 268–cysteine 277, cysteine 282–cysteine 286, cysteine 285–cysteine 317, cysteine 343–cysteine 449, cysteine 346–cysteine 352, cysteine 415–cysteine 429, cysteine 477–cysteine 590, cysteine 525–cysteine 549, and cysteine 527–cysteine 544. Residue asparagine 272 is glycosylated (N-linked (GlcNAc...) asparagine; by host). The Extracellular segment spans residues 325–691; it reads NARENFNVYK…YYYELYPTTT (367 aa). N-linked (GlcNAc...) asparagine; by host glycosylation occurs at asparagine 587. Residues 692–712 traverse the membrane as a helical segment; the sequence is IAVLAAASIVVASLVGLSLGM. The Cytoplasmic segment spans residues 713 to 747; that stretch reads CICARRRCITPYELTPGATIPFLLGILCCVKTAKA. The interval 715–719 is interaction with the capsid protein; it reads CARRR. S-palmitoyl cysteine; by host attachment occurs at residues cysteine 720, cysteine 740, and cysteine 741. A transient transmembrane before p62-6K protein processing region spans residues 720–740; that stretch reads CITPYELTPGATIPFLLGILC. Cysteine 720 and cysteine 741 are oxidised to a cystine. At 748-762 the chain is on the extracellular side; that stretch reads ASYYEAATYLWNEQQ. Residues 763–783 form a helical membrane-spanning segment; sequence PLFWLQLLIPLSAAIVVCNCL. Over 784 to 787 the chain is Cytoplasmic; the sequence is KLLP. Residues 788-808 form a helical membrane-spanning segment; it reads CCCKTLTFLAVMSIGARTVSA. Over 809–1223 the chain is Extracellular; that stretch reads YEHATVIPNT…AMSWVQKITG (415 aa). Disulfide bonds link cysteine 857–cysteine 922, cysteine 870–cysteine 902, cysteine 871–cysteine 904, and cysteine 876–cysteine 886. The interval 892 to 909 is E1 fusion peptide loop; it reads VYPFMWGGAYCFCDAENT. N-linked (GlcNAc...) asparagine; by host glycosylation is found at asparagine 949 and asparagine 1078. Cystine bridges form between cysteine 1067-cysteine 1079, cysteine 1109-cysteine 1184, cysteine 1114-cysteine 1188, and cysteine 1136-cysteine 1178. A helical transmembrane segment spans residues 1224-1244; that stretch reads GVGLVVAIAALILIIVLCVSF. The S-palmitoyl cysteine; by host moiety is linked to residue cysteine 1241. Residues 1245–1247 lie on the Cytoplasmic side of the membrane; that stretch reads SRH.

Homodimer. Homomultimer. Interacts with host karyopherin KPNA4; this interaction allows the nuclear import of the viral capsid protein. Interacts with spike glycoprotein E2. Interacts with host IRAK1; the interaction leads to inhibition of IRAK1-dependent signaling. In terms of assembly, the precursor of protein E3/E2 and E1 form a heterodimer shortly after synthesis. As to quaternary structure, the precursor of protein E3/E2 and E1 form a heterodimer shortly after synthesis. Processing of the precursor of protein E3/E2 into E2 and E3 results in a heterodimer of the spike glycoproteins E2 and E1. Spike at virion surface are constituted of three E2-E1 heterodimers. After target cell attachment and endocytosis, E1 change conformation to form homotrimers. Interacts with 6K protein. Interacts with spike glycoprotein E1. Processing of the precursor of protein E3/E2 into E2 and E3 results in a heterodimer of the spike glycoproteins E2 and E1. Spike at virion surface are constituted of a trimer of E2-E1 heterodimers. Interacts with 6K protein. Interacts with host MXRA8; this interaction mediates virus entry. In terms of assembly, oligomer. Interacts with spike glycoprotein E1. Interacts with spike glycoprotein E2. Post-translationally, structural polyprotein: Specific enzymatic cleavages in vivo yield mature proteins. Capsid protein is auto-cleaved during polyprotein translation, unmasking a signal peptide at the N-terminus of the precursor of E3/E2. The remaining polyprotein is then targeted to the host endoplasmic reticulum, where host signal peptidase cleaves it into pE2, 6K and E1 proteins. pE2 is further processed to mature E3 and E2 by host furin in trans-Golgi vesicle. Palmitoylated via thioester bonds. These palmitoylations may induce disruption of the C-terminus transmembrane. This would result in the reorientation of E2 C-terminus from lumenal to cytoplasmic side. In terms of processing, N-glycosylated. Post-translationally, palmitoylated via thioester bonds.

It localises to the virion. The protein resides in the host cytoplasm. Its subcellular location is the host cell membrane. It is found in the host nucleus. The protein localises to the virion membrane. It localises to the host Golgi apparatus. The protein resides in the host trans-Golgi network. Its subcellular location is the host endoplasmic reticulum. The enzyme catalyses Autocatalytic release of the core protein from the N-terminus of the togavirus structural polyprotein by hydrolysis of a -Trp-|-Ser- bond.. Its function is as follows. Forms an icosahedral capsid with a T=4 symmetry composed of 240 copies of the capsid protein surrounded by a lipid membrane through which penetrate 80 spikes composed of trimers of E1-E2 heterodimers. The capsid protein binds to the viral RNA genome at a site adjacent to a ribosome binding site for viral genome translation following genome release. Possesses a protease activity that results in its autocatalytic cleavage from the nascent structural protein. Following its self-cleavage, the capsid protein transiently associates with ribosomes, and within several minutes the protein binds to viral RNA and rapidly assembles into icosahedric core particles. The resulting nucleocapsid eventually associates with the cytoplasmic domain of the spike glycoprotein E2 at the cell membrane, leading to budding and formation of mature virions. In case of infection, new virions attach to target cells and after clathrin-mediated endocytosis their membrane fuses with the host endosomal membrane. This leads to the release of the nucleocapsid into the cytoplasm, followed by an uncoating event necessary for the genomic RNA to become accessible. The uncoating might be triggered by the interaction of capsid proteins with ribosomes. Binding of ribosomes would release the genomic RNA since the same region is genomic RNA-binding and ribosome-binding. Specifically inhibits interleukin-1 receptor-associated kinase 1/IRAK1-dependent signaling during viral entry, representing a means by which the alphaviruses may evade innate immune detection and activation prior to viral gene expression. Provides the signal sequence for the translocation of the precursor of protein E3/E2 to the host endoplasmic reticulum. Furin-cleaved E3 remains associated with spike glycoprotein E1 and mediates pH protection of the latter during the transport via the secretory pathway. After virion release from the host cell, the assembly protein E3 is gradually released in the extracellular space. In terms of biological role, plays a role in viral attachment to target host cell, by binding to the cell receptor MXRA8. Synthesized as a p62 precursor which is processed by furin at the cell membrane just before virion budding, giving rise to E2-E1 heterodimer. The p62-E1 heterodimer is stable, whereas E2-E1 is unstable and dissociate at low pH. p62 is processed at the last step, presumably to avoid E1 fusion activation before its final export to cell surface. E2 C-terminus contains a transitory transmembrane that would be disrupted by palmitoylation, resulting in reorientation of the C-terminal tail from lumenal to cytoplasmic side. This step is critical since E2 C-terminus is involved in budding by interacting with capsid proteins. This release of E2 C-terminus in cytoplasm occurs lately in protein export, and precludes premature assembly of particles at the endoplasmic reticulum membrane. Functionally, acts as a viroporin that participates in virus glycoprotein processing and transport to the plasma membrane, cell permeabilization and budding of viral particles. Disrupts the calcium homeostasis of the cell, probably at the endoplasmic reticulum level. This leads to cytoplasmic calcium elevation. Because of its lipophilic properties, the 6K protein is postulated to influence the selection of lipids that interact with the transmembrane domains of the glycoproteins, which, in turn, affects the deformability of the bilayer required for the extreme curvature that occurs as budding proceeds. Present in low amount in virions, about 3% compared to viral glycoproteins. Its function is as follows. Class II viral fusion protein. Fusion activity is inactive as long as E1 is bound to E2 in mature virion. After virus attachment to target cell via host MXRA8 and endocytosis, acidification of the endosome induce dissociation of E1/E2 heterodimer and concomitant trimerization of the E1 subunits. This E1 trimer is fusion active, and promotes release of viral nucleocapsid in cytoplasm after endosome and viral membrane fusion. Efficient fusion requires the presence of cholesterol and sphingolipid in the target membrane. The sequence is that of Structural polyprotein from Anopheles (Human).